Reading from the N-terminus, the 340-residue chain is Replication factor C subunit 5 (340 aa).

M1 carries the N-acetylmethionine modification. Residue 60-67 coordinates ATP; the sequence is GPPGTGKT.

It belongs to the activator 1 small subunits family. As to quaternary structure, subunit of the RFC complex, an heteropentameric complex consisting of a large subunit RFC1 and four small subunits RFC2, RFC3, RFC4 and RFC5; the RFC complex interacts with PCNA. Forms an heterotetrameric complex with RFC2, RFC3 and RFC4; this complex has ATPase activity but is not stimulated by PCNA. The heterotetramer of subunits RFC2, RFC3, RFC4 and RFC5 interacts with RAD17.

The protein resides in the nucleus. Subunit of the replication factor C (RFC) complex which acts during elongation of primed DNA templates by DNA polymerases delta and epsilon, and is necessary for ATP-dependent loading of proliferating cell nuclear antigen (PCNA) onto primed DNA. In Homo sapiens (Human), this protein is Replication factor C subunit 5 (RFC5).